Consider the following 208-residue polypeptide: Uracil phosphoribosyltransferase (208 aa).

Residues Arg78, Arg103, and 130–138 (DPMLATGGS) each bind 5-phospho-alpha-D-ribose 1-diphosphate. Residues Ile193 and 198–200 (GDA) contribute to the uracil site. A 5-phospho-alpha-D-ribose 1-diphosphate-binding site is contributed by Asp199.

It belongs to the UPRTase family. Mg(2+) serves as cofactor.

It carries out the reaction UMP + diphosphate = 5-phospho-alpha-D-ribose 1-diphosphate + uracil. The protein operates within pyrimidine metabolism; UMP biosynthesis via salvage pathway; UMP from uracil: step 1/1. Allosterically activated by GTP. Functionally, catalyzes the conversion of uracil and 5-phospho-alpha-D-ribose 1-diphosphate (PRPP) to UMP and diphosphate. This chain is Uracil phosphoribosyltransferase, found in Shewanella woodyi (strain ATCC 51908 / MS32).